We begin with the raw amino-acid sequence, 103 residues long: Small ribosomal subunit protein uS10 (103 aa).

This sequence belongs to the universal ribosomal protein uS10 family. As to quaternary structure, part of the 30S ribosomal subunit.

Involved in the binding of tRNA to the ribosomes. This is Small ribosomal subunit protein uS10 from Pseudomonas savastanoi pv. phaseolicola (strain 1448A / Race 6) (Pseudomonas syringae pv. phaseolicola (strain 1448A / Race 6)).